The chain runs to 220 residues: Putative respiratory nitrate reductase subunit Rieske (220 aa).

One can recognise a Rieske domain in the interval 118–206; sequence KAPTLLVRHA…ITVSSEGYLI (89 aa). [2Fe-2S] cluster is bound by residues Cys-151, His-153, Cys-168, and His-171. A disulfide bridge links Cys-156 with Cys-170.

Probable multiprotein complex; a catalytic heterodimer of an alpha and beta chain is proposed to associate with additional subunits involved in membrane attachment and electron transfer. It depends on [2Fe-2S] cluster as a cofactor.

The protein localises to the cell membrane. Its function is as follows. The respiratory membrane-bound nitrate reductase enzyme complex plays a role in generation of metabolic energy by using nitrate as a terminal electron acceptor during anaerobic conditions. Proposed Rieske subunit involved in a protonmotive Q-cycle mechanism-based electron transfer electrons to the beta subunit. This is Putative respiratory nitrate reductase subunit Rieske (narB) from Haloferax mediterranei (strain ATCC 33500 / DSM 1411 / JCM 8866 / NBRC 14739 / NCIMB 2177 / R-4) (Halobacterium mediterranei).